Reading from the N-terminus, the 489-residue chain is Homoserine O-acetyltransferase (489 aa).

Positions 69–438 (LLLCHALSGS…AEGHDGFLLE (370 aa)) constitute an AB hydrolase-1 domain. The active-site Nucleophile is Ser-163. A disordered region spans residues 255-329 (ASRHPYPDRL…QTTDSSSLNQ (75 aa)). Residues 280–290 (EGNRNRRERPC) are compositionally biased toward basic and acidic residues. Residues 299–329 (SESALNSPASSVSSLPSLGASQTTDSSSLNQ) show a composition bias toward low complexity. Catalysis depends on residues Asp-403 and His-432.

It belongs to the AB hydrolase superfamily. MetX family.

It is found in the cytoplasm. It carries out the reaction L-homoserine + acetyl-CoA = O-acetyl-L-homoserine + CoA. The protein operates within amino-acid biosynthesis; L-methionine biosynthesis via de novo pathway; O-acetyl-L-homoserine from L-homoserine: step 1/1. In terms of biological role, commits homoserine to the methionine biosynthesis pathway by catalyzing its O-acetylation. This is Homoserine O-acetyltransferase (met6) from Schizosaccharomyces pombe (strain 972 / ATCC 24843) (Fission yeast).